We begin with the raw amino-acid sequence, 181 residues long: Disulfide bond formation protein B (181 aa).

Residues 1 to 13 (MLSVGQWPNKPFA) lie on the Cytoplasmic side of the membrane. A helical membrane pass occupies residues 14–30 (WLLLFLGCSGLLGAALY). Residues 31–48 (FQMVLNLEPCVKCVYQRM) are Periplasmic-facing. An intrachain disulfide couples cysteine 40 to cysteine 43. The chain crosses the membrane as a helical span at residues 49–64 (AVIGIGLSAIVGLFGS). Over 65 to 71 (GLWLTRW) the chain is Cytoplasmic. A helical transmembrane segment spans residues 72–89 (AALIGWLYSSYQGLLIAY). Topologically, residues 90-145 (DHWDLQTSKNAFFAVCESAPNFPDWAPMHEWMPGLFAAPGLCGDIDWQWLGLGMPG) are periplasmic. A disulfide bridge links cysteine 105 with cysteine 131. The helical transmembrane segment at 146–164 (WMTVIFAGLLLIGIIVTIC) threads the bilayer. Residues 165-181 (HIISSFTKKDGLVLYHK) are Cytoplasmic-facing.

The protein belongs to the DsbB family.

Its subcellular location is the cell inner membrane. Functionally, required for disulfide bond formation in some periplasmic proteins. Acts by oxidizing the DsbA protein. The protein is Disulfide bond formation protein B of Idiomarina loihiensis (strain ATCC BAA-735 / DSM 15497 / L2-TR).